Consider the following 316-residue polypeptide: DNA-directed RNA polymerase subunit alpha (316 aa).

The segment at 1-230 (MIEFEKPNIH…EHLAMFVDLT (230 aa)) is alpha N-terminal domain (alpha-NTD). The interval 247-316 (KEKMLEMTIE…DLGLSLRKED (70 aa)) is alpha C-terminal domain (alpha-CTD).

The protein belongs to the RNA polymerase alpha chain family. As to quaternary structure, homodimer. The RNAP catalytic core consists of 2 alpha, 1 beta, 1 beta' and 1 omega subunit. When a sigma factor is associated with the core the holoenzyme is formed, which can initiate transcription.

It catalyses the reaction RNA(n) + a ribonucleoside 5'-triphosphate = RNA(n+1) + diphosphate. Functionally, DNA-dependent RNA polymerase catalyzes the transcription of DNA into RNA using the four ribonucleoside triphosphates as substrates. In Levilactobacillus brevis (strain ATCC 367 / BCRC 12310 / CIP 105137 / JCM 1170 / LMG 11437 / NCIMB 947 / NCTC 947) (Lactobacillus brevis), this protein is DNA-directed RNA polymerase subunit alpha.